Consider the following 493-residue polypeptide: MDDRRTILMDRYEIGRQLGQGNFAKVYYARNLTSGQAVAIKMIDKEKVTRVGLMVQIKREISIMRLVKHPNILQLFEVMASKSKIYFVLEYAKGGELFKKISKGKFSEDVARRYFHQLISGIDYCHSRGVYHRDLKPENLLLDENESLKVSDFGLSALSESKRHDGLLHTTCGTPAYVAPEVLSRRGYDGAKADIWSCGVILFVLVSGYLPFHDTNLIEMYRKIAKAEYKCPRSFSAELKDLLYKILDPDPSTRISIPKIKRSAWYRKSSDVNALKSKHETGDKVYKGEATTSDTTECSIFEGNRASSRDKVYTNGEATTSDSPECSNSDGKQASLSLPNLNAFDIISLSTGFDLSNLFEERYGRREERFTTRQPAAAIFAKLNELARRFKLKIKKKENGVLRLVAPKEGIKGLLELDAEVFELAPSFHLVEFKKSNGDTIEYQKLMKEDIRPALKDIVWAWQGGQHQQPEQSMQGMQGEQQPSRLPSQQPQG.

A Protein kinase domain is found at 12–266; sequence YEIGRQLGQG…IPKIKRSAWY (255 aa). Residues 18–26 and Lys-41 each bind ATP; that span reads LGQGNFAKV. The active-site Proton acceptor is the Asp-134. Residues 152–181 form an activation loop region; it reads DFGLSALSESKRHDGLLHTTCGTPAYVAPE. The segment at 311–332 is disordered; that stretch reads KVYTNGEATTSDSPECSNSDGK. The segment covering 316 to 332 has biased composition (polar residues); it reads GEATTSDSPECSNSDGK. The region spanning 320-360 is the NAF domain; the sequence is TSDSPECSNSDGKQASLSLPNLNAFDIISLSTGFDLSNLFE. The interval 365–394 is PPI; sequence RREERFTTRQPAAAIFAKLNELARRFKLKI. The tract at residues 465–493 is disordered; that stretch reads GQHQQPEQSMQGMQGEQQPSRLPSQQPQG.

This sequence belongs to the protein kinase superfamily. CAMK Ser/Thr protein kinase family. SNF1 subfamily. Mn(2+) serves as cofactor.

The enzyme catalyses L-seryl-[protein] + ATP = O-phospho-L-seryl-[protein] + ADP + H(+). The catalysed reaction is L-threonyl-[protein] + ATP = O-phospho-L-threonyl-[protein] + ADP + H(+). Its function is as follows. CIPK serine-threonine protein kinases interact with CBL proteins. Binding of a CBL protein to the regulatory NAF domain of CIPK protein lead to the activation of the kinase in a calcium-dependent manner. The protein is CBL-interacting protein kinase 26 (CIPK26) of Oryza sativa subsp. japonica (Rice).